Reading from the N-terminus, the 227-residue chain is DNA mismatch repair protein MutH (227 aa).

It belongs to the MutH family.

It is found in the cytoplasm. Sequence-specific endonuclease that cleaves unmethylated GATC sequences. It is involved in DNA mismatch repair. The polypeptide is DNA mismatch repair protein MutH (Vibrio vulnificus (strain CMCP6)).